We begin with the raw amino-acid sequence, 337 residues long: Phosphoenolpyruvate transferase (337 aa).

D69 provides a ligand contact to 7,8-didemethyl-8-hydroxy-5-deazariboflavin.

The protein belongs to the CofD family. Homodimer. It depends on Mg(2+) as a cofactor.

It carries out the reaction enolpyruvoyl-2-diphospho-5'-guanosine + 7,8-didemethyl-8-hydroxy-5-deazariboflavin = dehydro coenzyme F420-0 + GMP + H(+). Its pathway is cofactor biosynthesis; coenzyme F420 biosynthesis. In terms of biological role, catalyzes the transfer of the phosphoenolpyruvate moiety from enoylpyruvoyl-2-diphospho-5'-guanosine (EPPG) to 7,8-didemethyl-8-hydroxy-5-deazariboflavin (FO) with the formation of dehydro coenzyme F420-0 and GMP. The polypeptide is Phosphoenolpyruvate transferase (Mycobacterium avium (strain 104)).